We begin with the raw amino-acid sequence, 302 residues long: Nudix hydrolase 22, chloroplastic (302 aa).

A chloroplast-targeting transit peptide spans 1-25 (MKSGASAASPTAKSFNFGSSRLLAL). The region spanning 73–229 (PKKAAVLICL…DSDYVIWGLT (157 aa)) is the Nudix hydrolase domain. A Nudix box motif is present at residues 114–135 (KAEEHDKDDGITATREAEEEIG). Mg(2+) contacts are provided by Glu-129 and Glu-133.

The protein belongs to the Nudix hydrolase family. It depends on Mg(2+) as a cofactor. Requires Mn(2+) as cofactor. In terms of tissue distribution, expressed in roots, leaves, stems and inflorescences.

The protein localises to the plastid. It localises to the chloroplast. Its function is as follows. Probably mediates the hydrolysis of some nucleoside diphosphate derivatives. The chain is Nudix hydrolase 22, chloroplastic (NUDT22) from Arabidopsis thaliana (Mouse-ear cress).